The chain runs to 220 residues: Ribosomal RNA small subunit methyltransferase G (220 aa).

Residues G78, L83, and R144 each coordinate S-adenosyl-L-methionine.

Belongs to the methyltransferase superfamily. RNA methyltransferase RsmG family.

Its subcellular location is the cytoplasm. It carries out the reaction guanosine(527) in 16S rRNA + S-adenosyl-L-methionine = N(7)-methylguanosine(527) in 16S rRNA + S-adenosyl-L-homocysteine. Specifically methylates the N7 position of guanine in position 527 of 16S rRNA. This is Ribosomal RNA small subunit methyltransferase G from Alkalilimnicola ehrlichii (strain ATCC BAA-1101 / DSM 17681 / MLHE-1).